The primary structure comprises 225 residues: MAIKDWPEGEGPRDKLLVKGAAHLSDAELLAVLLRNGLSGLNAVDLARSLIQEFGGLRSLLCAPKHQVCRLPGVGPVKYAQLQAAAELARRVAQENLQRGQVLTNPDLTRDYLMRQLADRSYEVFAILLLDSQHRVIQFVELFRGTIDSASVYPREVVSLVLEKKAAAVIVCHNHPSGIAEPSQADRRITERLKNALATIDVSLLDHMVVGDREIVSFAERGWIN.

Residues Val102–Ile224 form the MPN domain. Zn(2+)-binding residues include His173, His175, and Asp186. The short motif at His173–Asp186 is the JAMM motif element.

This sequence belongs to the UPF0758 family.

This chain is UPF0758 protein Shewmr4_3597, found in Shewanella sp. (strain MR-4).